The sequence spans 598 residues: Probable polysaccharide biosynthesis protein EpsC (598 aa).

4 consecutive transmembrane segments (helical) span residues 1–21 (MIIA…YQFL), 31–51 (GALL…AFLF), 63–83 (LGEL…TGVI), and 87–107 (VYHT…LLSI).

The protein belongs to the polysaccharide synthase family.

The protein localises to the cell membrane. In terms of biological role, involved in biofilm formation. The protein is Probable polysaccharide biosynthesis protein EpsC (epsC) of Bacillus subtilis (strain 168).